The sequence spans 363 residues: Jasmonate-induced oxygenase 3 (363 aa).

The region spanning glutamate 210–proline 312 is the Fe2OG dioxygenase domain. Residue arginine 216 coordinates jasmonate. 2-oxoglutarate-binding residues include asparagine 218 and tyrosine 220. 3 residues coordinate Fe cation: histidine 235, aspartate 237, and histidine 293. The 2-oxoglutarate site is built by arginine 303 and serine 305. Residues arginine 342 and arginine 346 each contribute to the jasmonate site.

It belongs to the iron/ascorbate-dependent oxidoreductase family. The cofactor is L-ascorbate. Fe(2+) is required as a cofactor.

The enzyme catalyses jasmonate + 2-oxoglutarate + O2 = (1R,2R)-12-hydroxyjasmonate + succinate + CO2. 2-oxoglutarate-dependent dioxygenase involved in the oxidation of jasmonate (JA), a stress-induced phytohormone synthesized in response to attack by pathogens and herbivores, which triggers the activation of defense responses via the JA-mediated signaling pathway. Converts JA to 12-hydroxyjasmonate (12OH-JA), an inactive form of JA. Is specific to free JA, and cannot oxidize the bioactive form jasmonoyl-L-isoleucine (JA-Ile) or other JA-amino acid conjugates. Prevents over-accumulation of JA and indirectly its bioactive form JA-Ile under stress response. Acts as a negative regulator of JA-mediated defense signaling, by contributing to 12OH-JA accumulation, which represses JA defense responses upon infection by the fungal pathogen Botrytis cinerea. Acts as a negative regulator of JA-mediated defense responses upon infestation by the herbivorous caterpillar Mamestra brassicae. This chain is Jasmonate-induced oxygenase 3, found in Arabidopsis thaliana (Mouse-ear cress).